The primary structure comprises 128 residues: NHP2-like protein 1 (128 aa).

At M1 the chain carries N-acetylmethionine. T2 is modified (N-acetylthreonine; in NHP2-like protein 1, N-terminally processed). At K21 the chain carries N6-acetyllysine. The interval 36–48 (RKGANEATKTLNR) is interaction with U4 snRNA and U4atac snRNA. The tract at residues 96–128 (SRPVIACSVTIKEGSQLKQQIQSIQQSIERLLV) is important for U4 snRNA-binding. S122 bears the Phosphoserine mark.

Belongs to the eukaryotic ribosomal protein eL8 family. In terms of assembly, identified in the spliceosome B complex. Component of the U4/U6-U5 tri-snRNP complex composed of the U4, U6 and U5 snRNAs and at least PRPF3, PRPF4, PRPF6, PRPF8, PRPF31, SNRNP200, TXNL4A, WDR57, SNRNP40, DDX23, CD2BP2, PPIH, NHP2L1, EFTUD2, SART1 and USP39. Interacts with RAD17 and PRPF31. The complex formed by SNU13 and PRPF31 binds U4 snRNA. The complex formed by SNU13 and PRPF31 also binds U4atac snRNA, a characteristic component of specific, less abundant spliceosomal complexes. Part of the small subunit (SSU) processome, composed of more than 70 proteins and the RNA chaperone small nucleolar RNA (snoRNA) U3. Core component of box C/D small nucleolar ribonucleoprotein (snoRNP) particles; the core proteins SNU13, NOP56, NOP58 and FBL or FBLL1 assemble stepwise onto the snoRNA.

The protein resides in the nucleus. It is found in the nucleolus. Part of the small subunit (SSU) processome, first precursor of the small eukaryotic ribosomal subunit. During the assembly of the SSU processome in the nucleolus, many ribosome biogenesis factors, an RNA chaperone and ribosomal proteins associate with the nascent pre-rRNA and work in concert to generate RNA folding, modifications, rearrangements and cleavage as well as targeted degradation of pre-ribosomal RNA by the RNA exosome. Involved in pre-mRNA splicing as component of the spliceosome. Binds to the 5'-stem-loop of U4 snRNA and thereby contributes to spliceosome assembly. The protein undergoes a conformational change upon RNA-binding. Core component of box C/D small nucleolar ribonucleoprotein (snoRNP) complexes that function in methylation of multiple sites on ribosomal RNAs (rRNAs) and messenger RNAs (mRNAs). The sequence is that of NHP2-like protein 1 from Bos taurus (Bovine).